A 528-amino-acid chain; its full sequence is Cytochrome P450 monooxygenase polB (528 aa).

The chain crosses the membrane as a helical span at residues 3–23 (SFFLVCPVAFLGFTICYLVYV). Cysteine 473 lines the heme pocket.

Belongs to the cytochrome P450 family. Requires heme as cofactor.

Its subcellular location is the membrane. The catalysed reaction is 4beta-carboxyl motiol + reduced [NADPH--hemoprotein reductase] + O2 = 2alpha-hydroxyl, 4beta-carboxyl motiol + oxidized [NADPH--hemoprotein reductase] + H2O + H(+). It carries out the reaction 2-deoxypolytolypin + reduced [NADPH--hemoprotein reductase] + O2 = polytolypin + oxidized [NADPH--hemoprotein reductase] + H2O + H(+). It participates in secondary metabolite biosynthesis; terpenoid biosynthesis. Cytochrome P450 monooxygenase; part of the gene cluster that mediates the biosynthesis of antifungal fernane-type triterpenoid polytolypin. PolB acts as a hydroxylase and installs the 2-alpha-hydroxyl group in polytolypin. Within the pathway, the triterpene cyclase polA first catalyzes the cyclization of 2,3-oxidosqualene to motiol, polC converts the 4-alpha-methyl group of motiol to a carboxyl group, polB is responsible for appending a hydroxyl group at the 2-alpha position and polE is a dual functional P450, which can catalyze the formation of both the 1-beta-hydroxyl group and 10-beta-carboxyl group. The sequence is that of Cytochrome P450 monooxygenase polB from Polytolypa hystricis (strain UAMH7299).